We begin with the raw amino-acid sequence, 373 residues long: Stationary phase protein 5 (373 aa).

Functionally, required for survival at high temperature during stationary phase. The chain is Stationary phase protein 5 (SPG5) from Saccharomyces cerevisiae (strain ATCC 204508 / S288c) (Baker's yeast).